Here is a 285-residue protein sequence, read N- to C-terminus: Bifunctional protein FolD (285 aa).

Residues Gly-166–Ser-168, Ser-191, and Ile-232 each bind NADP(+).

The protein belongs to the tetrahydrofolate dehydrogenase/cyclohydrolase family. Homodimer.

It catalyses the reaction (6R)-5,10-methylene-5,6,7,8-tetrahydrofolate + NADP(+) = (6R)-5,10-methenyltetrahydrofolate + NADPH. The catalysed reaction is (6R)-5,10-methenyltetrahydrofolate + H2O = (6R)-10-formyltetrahydrofolate + H(+). The protein operates within one-carbon metabolism; tetrahydrofolate interconversion. In terms of biological role, catalyzes the oxidation of 5,10-methylenetetrahydrofolate to 5,10-methenyltetrahydrofolate and then the hydrolysis of 5,10-methenyltetrahydrofolate to 10-formyltetrahydrofolate. This chain is Bifunctional protein FolD, found in Actinobacillus pleuropneumoniae serotype 7 (strain AP76).